The sequence spans 720 residues: Polyribonucleotide nucleotidyltransferase (720 aa).

Mg(2+) is bound by residues D484 and D490. In terms of domain architecture, KH spans 551 to 610 (PRMYKINIDPSKIGSVIGSGGKTIRSIIEQTNTTVDIENDGTVVIGATDEASAKKAIKII). Residues 620 to 688 (GSIYTGKVTR…NQGRVNLSHR (69 aa)) form the S1 motif domain. Residues 697-720 (PISRNRDSQPRRPGPFRPSDRSNS) are disordered.

Belongs to the polyribonucleotide nucleotidyltransferase family. Mg(2+) is required as a cofactor.

It localises to the cytoplasm. It carries out the reaction RNA(n+1) + phosphate = RNA(n) + a ribonucleoside 5'-diphosphate. Its function is as follows. Involved in mRNA degradation. Catalyzes the phosphorolysis of single-stranded polyribonucleotides processively in the 3'- to 5'-direction. In Dehalococcoides mccartyi (strain CBDB1), this protein is Polyribonucleotide nucleotidyltransferase.